The sequence spans 94 residues: Co-chaperonin GroES (94 aa).

Belongs to the GroES chaperonin family. Heptamer of 7 subunits arranged in a ring. Interacts with the chaperonin GroEL.

The protein localises to the cytoplasm. Functionally, together with the chaperonin GroEL, plays an essential role in assisting protein folding. The GroEL-GroES system forms a nano-cage that allows encapsulation of the non-native substrate proteins and provides a physical environment optimized to promote and accelerate protein folding. GroES binds to the apical surface of the GroEL ring, thereby capping the opening of the GroEL channel. In Clostridium perfringens (strain ATCC 13124 / DSM 756 / JCM 1290 / NCIMB 6125 / NCTC 8237 / Type A), this protein is Co-chaperonin GroES.